Here is a 358-residue protein sequence, read N- to C-terminus: Dynein axonemal assembly factor 10 (358 aa).

6 WD repeats span residues 64–106 (EKPK…TPVY), 116–155 (NCIDGVGGVGIGEGAPEIVTGSRDGTVKVWDPRQKDTPVA), 163–206 (ETKR…VRWE), 208–250 (NIKN…PSKG), 258–298 (AHKS…QRSR), and 320–358 (LSTQPISSMDWSPDKKGLCVCTSFDQTVRVLIVTKLNKL).

As to quaternary structure, interacts with PIH1D1; the interaction associates DNAAF10 with the R2TP complex. Interacts with several dynein axonemal assembly factors.

It localises to the dynein axonemal particle. Key assembly factor specifically required for the stability of axonemal dynein heavy chains in cytoplasm. This Xenopus tropicalis (Western clawed frog) protein is Dynein axonemal assembly factor 10 (dnaaf10).